A 221-amino-acid polypeptide reads, in one-letter code: MPGKPVLHYFDGRGRMEPIRWLLAAAGVEFEENFLKTRDDLARLRSDGSLMFEQVPMVEIDGMKLVQTKAILNYIATKYNLYGKDMKERALIDMYAEGVADLELMVLYYPYMPPGEKEASLAKIKDKARNRYFPAYEKVLKSHGQDYLVGNKLSRADVSLVELLYHVEEMDPGIVDNFPLLKALRTRVSNLPTVKKFLQPGSQRKPFDDEKCVESAKKIFS.

The GST N-terminal domain maps to 3-83 (GKPVLHYFDG…YIATKYNLYG (81 aa)). An N6-succinyllysine modification is found at Lys4. Glutathione-binding positions include Tyr9, Arg45, 54 to 55 (QV), and 67 to 68 (QT). The GST C-terminal domain maps to 85 to 207 (DMKERALIDM…LQPGSQRKPF (123 aa)).

Belongs to the GST superfamily. Alpha family. As to quaternary structure, heterodimer of YC1 and YC2. In terms of tissue distribution, liver, nasal mucosa and epididymis.

The protein localises to the cytoplasm. The catalysed reaction is RX + glutathione = an S-substituted glutathione + a halide anion + H(+). Its function is as follows. Conjugation of reduced glutathione to a wide number of exogenous and endogenous hydrophobic electrophiles. Has substantial activity toward aflatoxin B1-8,9-epoxide. The polypeptide is Glutathione S-transferase alpha-5 (Gsta5) (Rattus norvegicus (Rat)).